Reading from the N-terminus, the 333-residue chain is Glycerol-3-phosphate dehydrogenase [NAD(P)+] (333 aa).

NADPH-binding residues include Trp16, Arg36, and Lys109. Residues Lys109, Gly137, and Ser139 each contribute to the sn-glycerol 3-phosphate site. Residue Ala141 coordinates NADPH. Lys192, Asp245, Ser255, Arg256, and Asn257 together coordinate sn-glycerol 3-phosphate. Catalysis depends on Lys192, which acts as the Proton acceptor. Arg256 contributes to the NADPH binding site. Positions 280 and 282 each coordinate NADPH.

The protein belongs to the NAD-dependent glycerol-3-phosphate dehydrogenase family.

It localises to the cytoplasm. The catalysed reaction is sn-glycerol 3-phosphate + NAD(+) = dihydroxyacetone phosphate + NADH + H(+). It carries out the reaction sn-glycerol 3-phosphate + NADP(+) = dihydroxyacetone phosphate + NADPH + H(+). The protein operates within membrane lipid metabolism; glycerophospholipid metabolism. Catalyzes the reduction of the glycolytic intermediate dihydroxyacetone phosphate (DHAP) to sn-glycerol 3-phosphate (G3P), the key precursor for phospholipid synthesis. This is Glycerol-3-phosphate dehydrogenase [NAD(P)+] from Parvibaculum lavamentivorans (strain DS-1 / DSM 13023 / NCIMB 13966).